Consider the following 206-residue polypeptide: MASRRRVLLKVIILGDSGVGKTSLMNQFVNRKFSNQYKATIGADFLTKEVQIDDRIFTLQIWDTAGQERFQSLGVAFYRGADCCVLVNDVNVMKSFENLNNWREEFLIQASPSDPENFPFVVLGNKTDVDGGKSRVVTEKKAKSWCASKGNIPYFETSAKDGVNVDAAFECIAKNALKNEPEEEVYLPDTIDVAGARQQRSTGCEC.

15–22 (GDSGVGKT) lines the GTP pocket. Positions 37–45 (YKATIGADF) match the Effector region motif. GTP-binding positions include 63 to 67 (DTAGQ), 125 to 128 (NKTD), and 158 to 159 (SA). 2 S-geranylgeranyl cysteine lipidation sites follow: cysteine 204 and cysteine 206. The residue at position 206 (cysteine 206) is a Cysteine methyl ester.

The protein belongs to the small GTPase superfamily. Rab family.

It localises to the cell membrane. Its function is as follows. Intracellular vesicle trafficking and protein transport. The chain is Ras-related protein RABG3c (RABG3C) from Arabidopsis thaliana (Mouse-ear cress).